A 304-amino-acid chain; its full sequence is Acetyl-coenzyme A carboxylase carboxyl transferase subunit beta (304 aa).

Residues 23-292 form the CoA carboxyltransferase N-terminal domain; sequence VWTKCDSCGQ…PNPEAPREGV (270 aa). Zn(2+)-binding residues include C27, C30, C46, and C49. The C4-type zinc-finger motif lies at 27–49; the sequence is CDSCGQVLYRAELERNLEVCPKC. Residues 284 to 304 form a disordered region; it reads NPEAPREGVVVPPVPDQEPEA. A compositionally biased stretch (pro residues) spans 295–304; it reads PPVPDQEPEA.

This sequence belongs to the AccD/PCCB family. In terms of assembly, acetyl-CoA carboxylase is a heterohexamer composed of biotin carboxyl carrier protein (AccB), biotin carboxylase (AccC) and two subunits each of ACCase subunit alpha (AccA) and ACCase subunit beta (AccD). The cofactor is Zn(2+).

The protein localises to the cytoplasm. The enzyme catalyses N(6)-carboxybiotinyl-L-lysyl-[protein] + acetyl-CoA = N(6)-biotinyl-L-lysyl-[protein] + malonyl-CoA. The protein operates within lipid metabolism; malonyl-CoA biosynthesis; malonyl-CoA from acetyl-CoA: step 1/1. Functionally, component of the acetyl coenzyme A carboxylase (ACC) complex. Biotin carboxylase (BC) catalyzes the carboxylation of biotin on its carrier protein (BCCP) and then the CO(2) group is transferred by the transcarboxylase to acetyl-CoA to form malonyl-CoA. This Escherichia coli O6:K15:H31 (strain 536 / UPEC) protein is Acetyl-coenzyme A carboxylase carboxyl transferase subunit beta.